The chain runs to 248 residues: 1-(5-phosphoribosyl)-5-[(5-phosphoribosylamino)methylideneamino] imidazole-4-carboxamide isomerase (248 aa).

Asp-8 acts as the Proton acceptor in catalysis. The active-site Proton donor is the Asp-127.

Belongs to the HisA/HisF family.

The protein localises to the cytoplasm. The enzyme catalyses 1-(5-phospho-beta-D-ribosyl)-5-[(5-phospho-beta-D-ribosylamino)methylideneamino]imidazole-4-carboxamide = 5-[(5-phospho-1-deoxy-D-ribulos-1-ylimino)methylamino]-1-(5-phospho-beta-D-ribosyl)imidazole-4-carboxamide. The protein operates within amino-acid biosynthesis; L-histidine biosynthesis; L-histidine from 5-phospho-alpha-D-ribose 1-diphosphate: step 4/9. The chain is 1-(5-phosphoribosyl)-5-[(5-phosphoribosylamino)methylideneamino] imidazole-4-carboxamide isomerase from Thermotoga neapolitana (strain ATCC 49049 / DSM 4359 / NBRC 107923 / NS-E).